The primary structure comprises 86 residues: Putative membrane protein insertion efficiency factor (86 aa).

The protein belongs to the UPF0161 family.

The protein resides in the cell inner membrane. Could be involved in insertion of integral membrane proteins into the membrane. In Mannheimia succiniciproducens (strain KCTC 0769BP / MBEL55E), this protein is Putative membrane protein insertion efficiency factor.